A 503-amino-acid chain; its full sequence is ATP synthase subunit alpha, chloroplastic (503 aa).

170–177 serves as a coordination point for ATP; that stretch reads GDRQTGKT.

It belongs to the ATPase alpha/beta chains family. In terms of assembly, F-type ATPases have 2 components, CF(1) - the catalytic core - and CF(0) - the membrane proton channel. CF(1) has five subunits: alpha(3), beta(3), gamma(1), delta(1), epsilon(1). CF(0) has four main subunits: a, b, b' and c.

It is found in the plastid. It localises to the chloroplast thylakoid membrane. It catalyses the reaction ATP + H2O + 4 H(+)(in) = ADP + phosphate + 5 H(+)(out). In terms of biological role, produces ATP from ADP in the presence of a proton gradient across the membrane. The alpha chain is a regulatory subunit. The protein is ATP synthase subunit alpha, chloroplastic of Gracilaria tenuistipitata var. liui (Red alga).